Reading from the N-terminus, the 89-residue chain is Small ribosomal subunit protein uS15 (89 aa).

The protein belongs to the universal ribosomal protein uS15 family. Part of the 30S ribosomal subunit. Forms a bridge to the 50S subunit in the 70S ribosome, contacting the 23S rRNA.

One of the primary rRNA binding proteins, it binds directly to 16S rRNA where it helps nucleate assembly of the platform of the 30S subunit by binding and bridging several RNA helices of the 16S rRNA. Its function is as follows. Forms an intersubunit bridge (bridge B4) with the 23S rRNA of the 50S subunit in the ribosome. The chain is Small ribosomal subunit protein uS15 from Pseudarthrobacter chlorophenolicus (strain ATCC 700700 / DSM 12829 / CIP 107037 / JCM 12360 / KCTC 9906 / NCIMB 13794 / A6) (Arthrobacter chlorophenolicus).